A 137-amino-acid polypeptide reads, in one-letter code: Large ribosomal subunit protein uL22 (137 aa).

It belongs to the universal ribosomal protein uL22 family. As to quaternary structure, part of the 50S ribosomal subunit.

Its function is as follows. This protein binds specifically to 23S rRNA; its binding is stimulated by other ribosomal proteins, e.g. L4, L17, and L20. It is important during the early stages of 50S assembly. It makes multiple contacts with different domains of the 23S rRNA in the assembled 50S subunit and ribosome. The globular domain of the protein is located near the polypeptide exit tunnel on the outside of the subunit, while an extended beta-hairpin is found that lines the wall of the exit tunnel in the center of the 70S ribosome. The chain is Large ribosomal subunit protein uL22 from Flavobacterium johnsoniae (strain ATCC 17061 / DSM 2064 / JCM 8514 / BCRC 14874 / CCUG 350202 / NBRC 14942 / NCIMB 11054 / UW101) (Cytophaga johnsonae).